Reading from the N-terminus, the 119-residue chain is Large ribosomal subunit protein bL20 (119 aa).

It belongs to the bacterial ribosomal protein bL20 family.

Its function is as follows. Binds directly to 23S ribosomal RNA and is necessary for the in vitro assembly process of the 50S ribosomal subunit. It is not involved in the protein synthesizing functions of that subunit. This Xanthomonas oryzae pv. oryzae (strain KACC10331 / KXO85) protein is Large ribosomal subunit protein bL20.